The chain runs to 389 residues: 8-amino-7-oxononanoate synthase (389 aa).

Substrate is bound at residue Arg19. 106 to 107 contributes to the pyridoxal 5'-phosphate binding site; the sequence is GY. Residue His131 participates in substrate binding. Residues Ser178, 203 to 206, and 234 to 237 each bind pyridoxal 5'-phosphate; these read DDAH and TLSK. Lys237 carries the post-translational modification N6-(pyridoxal phosphate)lysine. Thr351 lines the substrate pocket.

The protein belongs to the class-II pyridoxal-phosphate-dependent aminotransferase family. BioF subfamily. In terms of assembly, homodimer. It depends on pyridoxal 5'-phosphate as a cofactor.

The catalysed reaction is 6-carboxyhexanoyl-[ACP] + L-alanine + H(+) = (8S)-8-amino-7-oxononanoate + holo-[ACP] + CO2. It functions in the pathway cofactor biosynthesis; biotin biosynthesis. Catalyzes the decarboxylative condensation of pimeloyl-[acyl-carrier protein] and L-alanine to produce 8-amino-7-oxononanoate (AON), [acyl-carrier protein], and carbon dioxide. Can also use pimeloyl-CoA instead of pimeloyl-ACP as substrate. This is 8-amino-7-oxononanoate synthase (bioF) from Lysinibacillus sphaericus (Bacillus sphaericus).